The sequence spans 1484 residues: DNA-directed RNA polymerase subunit beta' (1484 aa).

Zn(2+) is bound by residues Cys-67, Cys-69, Cys-82, and Cys-85. The Mg(2+) site is built by Asp-499, Asp-501, and Asp-503. Residues Cys-867, Cys-943, Cys-950, and Cys-953 each contribute to the Zn(2+) site.

This sequence belongs to the RNA polymerase beta' chain family. In terms of assembly, the RNAP catalytic core consists of 2 alpha, 1 beta, 1 beta' and 1 omega subunit. When a sigma factor is associated with the core the holoenzyme is formed, which can initiate transcription. Mg(2+) is required as a cofactor. It depends on Zn(2+) as a cofactor.

It catalyses the reaction RNA(n) + a ribonucleoside 5'-triphosphate = RNA(n+1) + diphosphate. Functionally, DNA-dependent RNA polymerase catalyzes the transcription of DNA into RNA using the four ribonucleoside triphosphates as substrates. In Chlorobium phaeovibrioides (strain DSM 265 / 1930) (Prosthecochloris vibrioformis (strain DSM 265)), this protein is DNA-directed RNA polymerase subunit beta'.